Consider the following 332-residue polypeptide: Eukaryotic translation initiation factor 3 subunit I (332 aa).

4 WD repeats span residues 8–47 (GHERALTQVKYNGDGDIIFSVSKDHVDADSHNGERIGTYH), 48–87 (GHQGALWTVDVNPDSTLLATGGADNTLRLWEVQTGKLLHT), 144–182 (DESKATVAGFSYLAKYIISGHEDGSVTQWDGKTGELLSS), and 279–318 (GHFGPLNYVAVHPQGTGYCSGGEDGYVRVHHFDKPYFDFM).

Belongs to the eIF-3 subunit I family. Component of the eukaryotic translation initiation factor 3 (eIF-3) complex.

The protein localises to the cytoplasm. Component of the eukaryotic translation initiation factor 3 (eIF-3) complex, which is involved in protein synthesis of a specialized repertoire of mRNAs and, together with other initiation factors, stimulates binding of mRNA and methionyl-tRNAi to the 40S ribosome. The eIF-3 complex specifically targets and initiates translation of a subset of mRNAs involved in cell proliferation. The protein is Eukaryotic translation initiation factor 3 subunit I of Phaeosphaeria nodorum (strain SN15 / ATCC MYA-4574 / FGSC 10173) (Glume blotch fungus).